We begin with the raw amino-acid sequence, 317 residues long: Putative cuticle collagen 80 (317 aa).

The interval 80-262 (CNCGPQASNC…GAPGNDGAPG (183 aa)) is disordered. 3 triple-helical region regions span residues 92-124 (GPPG…AGPA), 137-199 (GAPG…SGQR), and 202-264 (GLPG…PGSD). 3 stretches are compositionally biased toward low complexity: residues 108 to 124 (QPGP…AGPA), 135 to 145 (PQGAPGPAGAP), and 175 to 206 (AGDA…LPGP). Composition is skewed to pro residues over residues 207-219 (SGRP…PGAP) and 230-240 (PAGPPGPPGPN). The span at 242 to 262 (QPGHPGQDGQPGAPGNDGAPG) shows a compositional bias: low complexity.

It belongs to the cuticular collagen family. Collagen polypeptide chains are complexed within the cuticle by disulfide bonds and other types of covalent cross-links.

Functionally, nematode cuticles are composed largely of collagen-like proteins. The cuticle functions both as an exoskeleton and as a barrier to protect the worm from its environment. The sequence is that of Putative cuticle collagen 80 (col-80) from Caenorhabditis elegans.